A 233-amino-acid chain; its full sequence is Large ribosomal subunit protein uL3 (233 aa).

Belongs to the universal ribosomal protein uL3 family. As to quaternary structure, part of the 50S ribosomal subunit. Forms a cluster with proteins L14 and L19.

Its function is as follows. One of the primary rRNA binding proteins, it binds directly near the 3'-end of the 23S rRNA, where it nucleates assembly of the 50S subunit. The protein is Large ribosomal subunit protein uL3 of Ureaplasma urealyticum serovar 10 (strain ATCC 33699 / Western).